Reading from the N-terminus, the 253-residue chain is 5-oxoprolinase subunit A (253 aa).

This sequence belongs to the LamB/PxpA family. As to quaternary structure, forms a complex composed of PxpA, PxpB and PxpC.

It catalyses the reaction 5-oxo-L-proline + ATP + 2 H2O = L-glutamate + ADP + phosphate + H(+). Its function is as follows. Catalyzes the cleavage of 5-oxoproline to form L-glutamate coupled to the hydrolysis of ATP to ADP and inorganic phosphate. This Bacillus anthracis (strain A0248) protein is 5-oxoprolinase subunit A.